The following is a 323-amino-acid chain: Leucine-rich repeat-containing protein 46 (323 aa).

4 LRR repeats span residues 49 to 70 (DLET…ERLR), 71 to 92 (NIHS…ACIT), 93 to 114 (SLRF…LDLQ), and 115 to 135 (YLQF…DELP). The region spanning 146–188 (NPCTNQDGYRKMVIGALPLLLDLDKQPILERWTSDEEDKSSDE) is the LRRCT domain. A Phosphothreonine modification is found at Thr-178. 3 positions are modified to phosphoserine: Ser-179, Ser-185, and Ser-186. Residues 203–228 (RGFFKDLEQELHQHQERRQQAALTEH) are a coiled coil. Residues 252–323 (DCSPAVTEEP…TKSTNKRGTK (72 aa)) form a disordered region. Positions 269–290 (ATSSTQMASSSKKQVPRNQKGS) are enriched in polar residues. Residues 297 to 310 (ALAATASKTSLAAA) show a composition bias toward low complexity. At Ser-303 the chain carries Phosphoserine.

It is found in the cell projection. It localises to the cilium. The protein resides in the flagellum. Functionally, required for normal spermatogenesis and male fertility. Plays an important role in sperm flagellum biogenesis. The protein is Leucine-rich repeat-containing protein 46 (Lrrc46) of Rattus norvegicus (Rat).